The chain runs to 1613 residues: MRSIIIASLVALALASSPAFERTFEPKTDYHYKFDGLVLSGLPSASSELSQSRISARARIQAVDDRYIHLQLVNIRMAASHLPESEQMPSLNSMEQRELSEEYKQMLELPLRAQLRNGLISELQFDKEDAEWSKNMKRAVVNMISFNPIAPRNEIEKIESSYDKEEQSEENTSFFTNEKTLEGDCQVAYTVIREQKKTIITKSINFDKCTERSEIAYGLRYSSECPECEKDTELIRPQTVYTYVLENEELKESEVRSLYTVNVNGQEVMKTETRSKLVLEENHSIKSHIKKVNGEKESIIYSSRWEQLVEDFFKNGDKAEFAPFEKFPLDKKMHLIKTITEQIQEVENNMPETSHFLARLVRIFRTTSTSQLKEIHETLYVKADKKIQSLMEHALAIAGTKNTIQHILVHMENEDILPLGQILKTIQETPFPSQSIAEALIKFAESRVAKNNLVVRQAAWLAAGSVVRGIVDYKNIRPLVREDKRELKEKFLRVFMQQYKDAETTYEKILALKTIGNAGLDISVNQLNEIIVDKRQPLPVRKEAIDALRLLKDTMPRKIQKVLLPIYKNRQYEPEIRMLALWRMMHTRPEESLLVQVVSQMEKETNQQVAALTHQMIRHFAMSTNPCYQRVAIVCSKVLSFTRYQPQEQMIASSYAQLPLFLQNSFSGAQFDFAAIFEKNSFLPKDLHASLDAVFGGNWNKYFAQIGFSQQHMDKYVQMALEKLESLEKESTTVVRGRRIQTGIKLLKELAQKMNIRARPATYTEKDAFAMVYLRYKDMDYAFLPIDRQLVENLIEKFTSNGKVQFSEIRRLLNQELEFETHHAAYFYEAIRKFPTTLGLPLTISGKIPTVISAEGQFSLELEGTELRLTVEARPSVAATHVYEMRMFTPLFEQGVKSVQSVRAYTPIKIQAVAGMKRNFEIVYKVVVPENQKSIVSLTTRPVVFLRFPGFSKFEYIEAEERTVVVPQWQQKTQEIEKVFNFLGLEVSTRGNILNQHTLENWLLAEQDFEVSVENKNRPAEFTARLTVGQLEKTELSQIKYNKIFEKEFELEQENTESRREYFNKMVKNIQKEQGYKSVISLKLEAPRDYTMNTELTTVCDKQVRMCQWEVEIRRSPILEETKEWTLRSQLLVVRPEMPSSLRQLRDQPHREVQLSLTSTWGSQKKSEVTVNAQLQQSKEQKKYERNMDRQFNGMPEYELLIKAARLNQINAVAEYKLTRETEQVLARYFDLVKTYNYWTVSSRPENNENDRVVVQLTVEPMSRQYVNITMQSPMERIELKNVQVPRVYLPSIAQRSVKHQLTEASGSVCKVQKNQIRTFDDVLYNTPLTTCYSLIAKDCSEEPTFAVLSKKTEKNSEEMIIKVIRGEQEIVAQLQNEEIRVKVDGKKIQSEDYSAYQIERLGESAIVIELPEGEVRFDGYTIKTQLPSYSRKNQLCGLCGNNDDESTNEFYTSDNTETEDIEEFHRSYLLKNEECEAEEERLSEKKNYRKYERDEEQSDEYSSEETYDYEQENTKKSQKNQRSQKKSDLVEKTQIKEFSHRICFSVEPVAECRRGYEVEQQQQRKIRFTCLQRHNRDASRLLKESRQQPLQLDDYPVSFVESVKVPTACVAY.

An N-terminal signal peptide occupies residues 1–15 (MRSIIIASLVALALA). The Vitellogenin domain maps to 24–687 (FEPKTDYHYK…EKNSFLPKDL (664 aa)). The N-linked (GlcNAc...) asparagine glycan is linked to N1268. The VWFD domain occupies 1308–1477 (SVCKVQKNQI…SYLLKNEECE (170 aa)). 2 cysteine pairs are disulfide-bonded: C1310/C1440 and C1332/C1476. Residues 1491-1531 (KYERDEEQSDEYSSEETYDYEQENTKKSQKNQRSQKKSDLV) form a disordered region. A compositionally biased stretch (acidic residues) spans 1495 to 1512 (DEEQSDEYSSEETYDYEQ).

As to expression, expressed in the intestine of adult hermaphrodites.

The protein localises to the secreted. In terms of biological role, precursor of the egg-yolk proteins that are sources of nutrients during embryonic development. Together with other vitellogenins, may play a role in modulating life-span, acting via induction of autophagy and lysosomal lipolysis. This Caenorhabditis elegans protein is Vitellogenin-2 (vit-2).